We begin with the raw amino-acid sequence, 255 residues long: Imidazole glycerol phosphate synthase subunit HisF (255 aa).

Active-site residues include Asp-11 and Asp-130.

This sequence belongs to the HisA/HisF family. As to quaternary structure, heterodimer of HisH and HisF.

The protein localises to the cytoplasm. It carries out the reaction 5-[(5-phospho-1-deoxy-D-ribulos-1-ylimino)methylamino]-1-(5-phospho-beta-D-ribosyl)imidazole-4-carboxamide + L-glutamine = D-erythro-1-(imidazol-4-yl)glycerol 3-phosphate + 5-amino-1-(5-phospho-beta-D-ribosyl)imidazole-4-carboxamide + L-glutamate + H(+). Its pathway is amino-acid biosynthesis; L-histidine biosynthesis; L-histidine from 5-phospho-alpha-D-ribose 1-diphosphate: step 5/9. IGPS catalyzes the conversion of PRFAR and glutamine to IGP, AICAR and glutamate. The HisF subunit catalyzes the cyclization activity that produces IGP and AICAR from PRFAR using the ammonia provided by the HisH subunit. In Rhodopseudomonas palustris (strain BisB5), this protein is Imidazole glycerol phosphate synthase subunit HisF.